The following is a 352-amino-acid chain: Minor capsid protein VP2 (352 aa).

G2 carries N-myristoyl glycine; by host lipidation. The interval 273-308 is D1; sequence SGEFIEKTLAPGGANQRIAPQWMLPLLLGLYGTVTP. Residues 290-310 traverse the membrane as a helical segment; sequence IAPQWMLPLLLGLYGTVTPAL. The disordered stretch occupies residues 312–352; it reads AYEDAPSKKKRRMSRGSSQKAKGPRASSKTSYKRRRRSTRS. The segment at 313-352 is DNA-binding; sequence YEDAPSKKKRRMSRGSSQKAKGPRASSKTSYKRRRRSTRS. A Nuclear localization signal motif is present at residues 316 to 324; sequence APSKKKRRM. Residues 342–352 show a composition bias toward basic residues; it reads SYKRRRRSTRS.

The protein belongs to the polyomaviruses capsid protein VP2 family. Forms homooligomers, and heterooligomers with VP3 in the endoplasmic reticulum membrane. Interacts (via D1 domain) with VP1. In terms of assembly, interacts (via D1 domain) with VP1.

It localises to the virion. Its subcellular location is the host nucleus. The protein localises to the host endoplasmic reticulum. The protein resides in the host endoplasmic reticulum membrane. Functionally, structural protein that resides within the core of the capsid surrounded by 72 VP1 pentamers. Participates in host cell receptor binding together with VP1. Following virus endocytosis and trafficking to the endoplasmic reticulum, VP2 and VP3 form oligomers and integrate into the endoplasmic reticulum membrane. Heterooligomer VP2-VP3 may create a viroporin for transporting the viral genome across the endoplasmic reticulum membrane to the cytoplasm. Nuclear entry of the viral DNA involves the selective exposure and importin recognition of VP2 or VP3 nuclear localization signal (shared C-terminus). Plays a role in virion assembly within the nucleus in particular through a DNA-binding domain located in the C-terminal region. An N-terminal myristoylation suggests a scaffold function for virion assembly. Structural protein that resides within the core of the capsid surrounded by 72 VP1 pentamers. Following virus endocytosis and trafficking to the endoplasmic reticulum, VP2 and VP3 form oligomers and integrate into the endoplasmic reticulum membrane. Heterooligomer VP2-VP3 may create a viroporin for transporting the viral genome across the endoplasmic reticulum membrane to the cytoplasm. Nuclear entry of the viral DNA involves the selective exposure and importin recognition of VP2 or VP3 nuclear localization signal (shared C-terminus). Plays a role in virion assembly within the nucleus. May participate in host cell lysis when associated with VP4. Its function is as follows. Viroporin inducing perforation of cellular membranes to trigger virus progeny release. Forms pores of 3 nm inner diameter. VP4 is expressed about 24 hours after the late structural proteins and is not incorporated into the mature virion. The chain is Minor capsid protein VP2 from Simian virus 12 (strain wt100) (SV-12).